The sequence spans 268 residues: 5'-nucleotidase SurE (268 aa).

A divalent metal cation contacts are provided by Asp8, Asp9, Ser40, and Asn98.

It belongs to the SurE nucleotidase family. A divalent metal cation serves as cofactor.

The protein localises to the cytoplasm. It catalyses the reaction a ribonucleoside 5'-phosphate + H2O = a ribonucleoside + phosphate. In terms of biological role, nucleotidase that shows phosphatase activity on nucleoside 5'-monophosphates. The sequence is that of 5'-nucleotidase SurE from Trichodesmium erythraeum (strain IMS101).